The following is a 603-amino-acid chain: UvrABC system protein C (603 aa).

Residues 15–92 (DQPGCYLMKD…IKKHDPRFNI (78 aa)) enclose the GIY-YIG domain. In terms of domain architecture, UVR spans 197–232 (KTVKNDLMKKMQVAAENMEFEKAGEFRDQINAIETT).

It belongs to the UvrC family. Interacts with UvrB in an incision complex.

It localises to the cytoplasm. Functionally, the UvrABC repair system catalyzes the recognition and processing of DNA lesions. UvrC both incises the 5' and 3' sides of the lesion. The N-terminal half is responsible for the 3' incision and the C-terminal half is responsible for the 5' incision. The polypeptide is UvrABC system protein C (Listeria welshimeri serovar 6b (strain ATCC 35897 / DSM 20650 / CCUG 15529 / CIP 8149 / NCTC 11857 / SLCC 5334 / V8)).